The following is a 296-amino-acid chain: Cobalamin trafficking protein CblD (296 aa).

Residues 1–92 constitute a mitochondrion transit peptide; sequence MANVLCNRAR…HLNGTAAQRK (92 aa).

Heterodimer with MMACHC. Forms a multiprotein complex with MMACHC, MTR and MTRR.

The protein resides in the cytoplasm. Its subcellular location is the mitochondrion. In terms of biological role, involved in cobalamin metabolism and trafficking. Plays a role in regulating the biosynthesis and the proportion of two coenzymes, methylcob(III)alamin (MeCbl) and 5'-deoxyadenosylcobalamin (AdoCbl). Promotes oxidation of cob(II)alamin bound to MMACHC. The processing of cobalamin in the cytosol occurs in a multiprotein complex composed of at least MMACHC, MMADHC, MTRR (methionine synthase reductase) and MTR (methionine synthase) which may contribute to shuttle safely and efficiently cobalamin towards MTR in order to produce methionine. The sequence is that of Cobalamin trafficking protein CblD (MMADHC) from Gallus gallus (Chicken).